The following is a 149-amino-acid chain: Protein E6 (149 aa).

2 zinc fingers span residues 30-66 and 103-139; these read CVEC…CKLC and CIIC…CAAC. The short motif at 147-149 is the PDZ-binding domain element; it reads TAL.

The protein belongs to the papillomaviridae E6 protein family. In terms of assembly, forms homodimers. Interacts with ubiquitin-protein ligase UBE3A/E6-AP and thus forms a complex with human TP53. Interacts with human NFX1 and MAGI3. Interacts with human IRF3; this interaction inhibits the establishment of antiviral state. Interacts with human TYK2; this interaction inhibits JAK-STAT activation by interferon alpha. Interacts with host DLG1; this interaction leads to the proteasomal degradation of DLG1.

The protein localises to the host cytoplasm. Its subcellular location is the host nucleus. Functionally, this protein may be involved in the oncogenic potential of this virus (cervical neoplasia-associated virus). Its function is as follows. Plays a major role in the induction and maintenance of cellular transformation. Acts mainly as an oncoprotein by stimulating the destruction of many host cell key regulatory proteins. E6 associates with host UBE3A/E6-AP ubiquitin-protein ligase, and inactivates tumor suppressors TP53 and TP73 by targeting them to the 26S proteasome for degradation. In turn, DNA damage and chromosomal instabilities increase and lead to cell proliferation and cancer development. The complex E6/E6AP targets several other substrates to degradation via the proteasome including host DLG1 or NFX1, a repressor of human telomerase reverse transcriptase (hTERT). The resulting increased expression of hTERT prevents the shortening of telomere length leading to cell immortalization. Other cellular targets including BAK1, Fas-associated death domain-containing protein (FADD) and procaspase 8, are degraded by E6/E6AP causing inhibition of apoptosis. E6 also inhibits immune response by interacting with host IRF3 and TYK2. These interactions prevent IRF3 transcriptional activities and inhibit TYK2-mediated JAK-STAT activation by interferon alpha resulting in inhibition of the interferon signaling pathway. The chain is Protein E6 from Homo sapiens (Human).